Consider the following 572-residue polypeptide: Sulfite reductase [NADPH] hemoprotein beta-component (572 aa).

Cys437, Cys443, Cys482, and Cys486 together coordinate [4Fe-4S] cluster. Position 486 (Cys486) interacts with siroheme.

It belongs to the nitrite and sulfite reductase 4Fe-4S domain family. In terms of assembly, alpha(8)-beta(8). The alpha component is a flavoprotein, the beta component is a hemoprotein. Siroheme is required as a cofactor. [4Fe-4S] cluster serves as cofactor.

The enzyme catalyses hydrogen sulfide + 3 NADP(+) + 3 H2O = sulfite + 3 NADPH + 4 H(+). Its pathway is sulfur metabolism; hydrogen sulfide biosynthesis; hydrogen sulfide from sulfite (NADPH route): step 1/1. Functionally, component of the sulfite reductase complex that catalyzes the 6-electron reduction of sulfite to sulfide. This is one of several activities required for the biosynthesis of L-cysteine from sulfate. In Bacillus licheniformis (strain ATCC 14580 / DSM 13 / JCM 2505 / CCUG 7422 / NBRC 12200 / NCIMB 9375 / NCTC 10341 / NRRL NRS-1264 / Gibson 46), this protein is Sulfite reductase [NADPH] hemoprotein beta-component.